The following is a 175-amino-acid chain: uncharacterized protein (175 aa).

Residues 1-2 (ME) lie on the Extracellular side of the membrane. A helical transmembrane segment spans residues 3–23 (SIILSIAIFIGVLLGTSVGAG). Over 24-151 (SGSSISPDVD…TGISTTMNAR (128 aa)) the chain is Cytoplasmic. The tract at residues 26-88 (SSISPDVDAG…DVGAGSGSSI (63 aa)) is disordered. Positions 59 to 78 (FSGSSTSPDVDAGSGSSTSP) are enriched in polar residues. The chain crosses the membrane as a helical span at residues 152–172 (VAVLITAAILSAPVTAIALLE). The Extracellular portion of the chain corresponds to 173 to 175 (ARR).

It localises to the membrane. This is an uncharacterized protein from Saccharomyces cerevisiae (strain ATCC 204508 / S288c) (Baker's yeast).